Here is a 346-residue protein sequence, read N- to C-terminus: Holliday junction branch migration complex subunit RuvB (346 aa).

Polar residues predominate over residues 1–11; that stretch reads MTEQRTIASSA. The disordered stretch occupies residues 1 to 20; it reads MTEQRTIASSATREDEAADA. The tract at residues 1–183 is large ATPase domain (RuvB-L); that stretch reads MTEQRTIASS…FGIVQRLEFY (183 aa). ATP is bound by residues isoleucine 22, arginine 23, glycine 64, lysine 67, threonine 68, threonine 69, 130-132, arginine 173, tyrosine 183, and arginine 220; that span reads EDF. Threonine 68 contacts Mg(2+). The segment at 184-254 is small ATPAse domain (RuvB-S); sequence SPQELTRIVI…VAQAAMQMLK (71 aa). The segment at 257 to 346 is head domain (RuvB-H); that stretch reads PEGFDELDRR…PAIGEPGDLF (90 aa). Arginine 293, arginine 312, and arginine 317 together coordinate DNA.

It belongs to the RuvB family. Homohexamer. Forms an RuvA(8)-RuvB(12)-Holliday junction (HJ) complex. HJ DNA is sandwiched between 2 RuvA tetramers; dsDNA enters through RuvA and exits via RuvB. An RuvB hexamer assembles on each DNA strand where it exits the tetramer. Each RuvB hexamer is contacted by two RuvA subunits (via domain III) on 2 adjacent RuvB subunits; this complex drives branch migration. In the full resolvosome a probable DNA-RuvA(4)-RuvB(12)-RuvC(2) complex forms which resolves the HJ.

The protein resides in the cytoplasm. It catalyses the reaction ATP + H2O = ADP + phosphate + H(+). Its function is as follows. The RuvA-RuvB-RuvC complex processes Holliday junction (HJ) DNA during genetic recombination and DNA repair, while the RuvA-RuvB complex plays an important role in the rescue of blocked DNA replication forks via replication fork reversal (RFR). RuvA specifically binds to HJ cruciform DNA, conferring on it an open structure. The RuvB hexamer acts as an ATP-dependent pump, pulling dsDNA into and through the RuvAB complex. RuvB forms 2 homohexamers on either side of HJ DNA bound by 1 or 2 RuvA tetramers; 4 subunits per hexamer contact DNA at a time. Coordinated motions by a converter formed by DNA-disengaged RuvB subunits stimulates ATP hydrolysis and nucleotide exchange. Immobilization of the converter enables RuvB to convert the ATP-contained energy into a lever motion, pulling 2 nucleotides of DNA out of the RuvA tetramer per ATP hydrolyzed, thus driving DNA branch migration. The RuvB motors rotate together with the DNA substrate, which together with the progressing nucleotide cycle form the mechanistic basis for DNA recombination by continuous HJ branch migration. Branch migration allows RuvC to scan DNA until it finds its consensus sequence, where it cleaves and resolves cruciform DNA. This is Holliday junction branch migration complex subunit RuvB from Xanthomonas campestris pv. campestris (strain ATCC 33913 / DSM 3586 / NCPPB 528 / LMG 568 / P 25).